We begin with the raw amino-acid sequence, 301 residues long: D-alanine--D-alanine ligase A (301 aa).

The ATP-grasp domain maps to 99-293; the sequence is KRILAFGNVR…FEELLDTIIE (195 aa). Residue 126-181 coordinates ATP; that stretch reads IENLGYPVFVKPNNGGSSVATTLVESKEAVKDAVLEALKYDTEVMIEEYIKGDEIT. Positions 248, 260, and 262 each coordinate Mg(2+).

This sequence belongs to the D-alanine--D-alanine ligase family. Requires Mg(2+) as cofactor. It depends on Mn(2+) as a cofactor.

The protein resides in the cytoplasm. It catalyses the reaction 2 D-alanine + ATP = D-alanyl-D-alanine + ADP + phosphate + H(+). It participates in cell wall biogenesis; peptidoglycan biosynthesis. Functionally, cell wall formation. The polypeptide is D-alanine--D-alanine ligase A (Clostridium perfringens (strain 13 / Type A)).